The sequence spans 157 residues: Transcriptional repressor NrdR (157 aa).

The segment at 3 to 34 (CPFCGFADTRVIDSRLGKEGNNIRRRRECSQC) is a zinc-finger region. An ATP-cone domain is found at 49-139 (PLIIKKDARR…VYRQFKDINE (91 aa)).

The protein belongs to the NrdR family. Requires Zn(2+) as cofactor.

Negatively regulates transcription of bacterial ribonucleotide reductase nrd genes and operons by binding to NrdR-boxes. The chain is Transcriptional repressor NrdR from Syntrophotalea carbinolica (strain DSM 2380 / NBRC 103641 / GraBd1) (Pelobacter carbinolicus).